Consider the following 239-residue polypeptide: Pyridoxine 5'-phosphate synthase (239 aa).

N9 contacts 3-amino-2-oxopropyl phosphate. 1-deoxy-D-xylulose 5-phosphate is bound at residue 11 to 12 (DH). 3-amino-2-oxopropyl phosphate is bound at residue R20. The active-site Proton acceptor is H45. 1-deoxy-D-xylulose 5-phosphate contacts are provided by R47 and H52. The Proton acceptor role is filled by E72. T102 contacts 1-deoxy-D-xylulose 5-phosphate. H189 functions as the Proton donor in the catalytic mechanism. 3-amino-2-oxopropyl phosphate-binding positions include G190 and 211–212 (GH).

It belongs to the PNP synthase family. As to quaternary structure, homooctamer; tetramer of dimers.

It is found in the cytoplasm. It carries out the reaction 3-amino-2-oxopropyl phosphate + 1-deoxy-D-xylulose 5-phosphate = pyridoxine 5'-phosphate + phosphate + 2 H2O + H(+). It functions in the pathway cofactor biosynthesis; pyridoxine 5'-phosphate biosynthesis; pyridoxine 5'-phosphate from D-erythrose 4-phosphate: step 5/5. Catalyzes the complicated ring closure reaction between the two acyclic compounds 1-deoxy-D-xylulose-5-phosphate (DXP) and 3-amino-2-oxopropyl phosphate (1-amino-acetone-3-phosphate or AAP) to form pyridoxine 5'-phosphate (PNP) and inorganic phosphate. This chain is Pyridoxine 5'-phosphate synthase, found in Ehrlichia chaffeensis (strain ATCC CRL-10679 / Arkansas).